Consider the following 433-residue polypeptide: ATP-dependent RNA helicase SUB2 (433 aa).

Residues 1-17 (MSAENQEELLDYSDSEE) are compositionally biased toward acidic residues. Residues 1–39 (MSAENQEELLDYSDSEEIAVPTTTQAGEGESANDKEADK) are disordered. The Q motif signature appears at 49–77 (TGFRDFLLKPELLRAIGDCGFEHPSEVQQ). Positions 80-255 (IPQSILGTDV…KKFMQNPLEI (176 aa)) constitute a Helicase ATP-binding domain. 93–100 (AKSGLGKT) serves as a coordination point for ATP. The short motif at 202 to 205 (DECD) is the DEAD box element. The Helicase C-terminal domain maps to 267 to 428 (GLQQYYIKLE…EFPEEGVDPS (162 aa)).

Belongs to the DEAD box helicase family. DECD subfamily.

It localises to the nucleus. It carries out the reaction ATP + H2O = ADP + phosphate + H(+). ATP-binding RNA helicase involved in transcription elongation and required for the export of mRNA out of the nucleus. SUB2 also plays a role in pre-mRNA splicing and spliceosome assembly. May be involved in rDNA and telomeric silencing, and maintenance of genome integrity. This Lodderomyces elongisporus (strain ATCC 11503 / CBS 2605 / JCM 1781 / NBRC 1676 / NRRL YB-4239) (Yeast) protein is ATP-dependent RNA helicase SUB2 (SUB2).